The sequence spans 307 residues: Transcription initiation factor IIB (307 aa).

The TFIIB-type zinc finger occupies 11–42 (FTEECPACGSAEIVFDEERGEYVCANCGLVTE). Residues Cys-15, Cys-18, Cys-34, and Cys-37 each coordinate Zn(2+). Residues 48 to 69 (PGPEWRHFNPDQRQRRSRTGEP) form a disordered region. Over residues 50-69 (PEWRHFNPDQRQRRSRTGEP) the composition is skewed to basic and acidic residues. 2 tandem repeats follow at residues 123–207 (LELE…QRRL) and 218–299 (DHLP…EICE).

It belongs to the TFIIB family.

Functionally, stabilizes TBP binding to an archaeal box-A promoter. Also responsible for recruiting RNA polymerase II to the pre-initiation complex (DNA-TBP-TFIIB). This is Transcription initiation factor IIB from Methanopyrus kandleri (strain AV19 / DSM 6324 / JCM 9639 / NBRC 100938).